The sequence spans 361 residues: Holliday junction branch migration complex subunit RuvB (361 aa).

The segment at 1–21 is disordered; sequence MHKDEDQRLLGAVPLPNDPDR. Residues 1-184 form a large ATPase domain (RuvB-L) region; the sequence is MHKDEDQRLL…FGIPIRLNFY (184 aa). ATP is bound by residues leucine 23, arginine 24, glycine 65, lysine 68, threonine 69, threonine 70, 131-133, arginine 174, tyrosine 184, and arginine 221; that span reads EDY. Threonine 69 is a Mg(2+) binding site. The interval 185–255 is small ATPAse domain (RuvB-S); that stretch reads TIEELEYIVQ…IADEALSRLE (71 aa). The tract at residues 258 to 361 is head domain (RuvB-H); it reads HLGLDPLDRR…QTVLWDEADD (104 aa). Arginine 294, arginine 313, and arginine 318 together coordinate DNA.

It belongs to the RuvB family. In terms of assembly, homohexamer. Forms an RuvA(8)-RuvB(12)-Holliday junction (HJ) complex. HJ DNA is sandwiched between 2 RuvA tetramers; dsDNA enters through RuvA and exits via RuvB. An RuvB hexamer assembles on each DNA strand where it exits the tetramer. Each RuvB hexamer is contacted by two RuvA subunits (via domain III) on 2 adjacent RuvB subunits; this complex drives branch migration. In the full resolvosome a probable DNA-RuvA(4)-RuvB(12)-RuvC(2) complex forms which resolves the HJ.

It is found in the cytoplasm. It carries out the reaction ATP + H2O = ADP + phosphate + H(+). In terms of biological role, the RuvA-RuvB-RuvC complex processes Holliday junction (HJ) DNA during genetic recombination and DNA repair, while the RuvA-RuvB complex plays an important role in the rescue of blocked DNA replication forks via replication fork reversal (RFR). RuvA specifically binds to HJ cruciform DNA, conferring on it an open structure. The RuvB hexamer acts as an ATP-dependent pump, pulling dsDNA into and through the RuvAB complex. RuvB forms 2 homohexamers on either side of HJ DNA bound by 1 or 2 RuvA tetramers; 4 subunits per hexamer contact DNA at a time. Coordinated motions by a converter formed by DNA-disengaged RuvB subunits stimulates ATP hydrolysis and nucleotide exchange. Immobilization of the converter enables RuvB to convert the ATP-contained energy into a lever motion, pulling 2 nucleotides of DNA out of the RuvA tetramer per ATP hydrolyzed, thus driving DNA branch migration. The RuvB motors rotate together with the DNA substrate, which together with the progressing nucleotide cycle form the mechanistic basis for DNA recombination by continuous HJ branch migration. Branch migration allows RuvC to scan DNA until it finds its consensus sequence, where it cleaves and resolves cruciform DNA. The sequence is that of Holliday junction branch migration complex subunit RuvB from Bartonella henselae (strain ATCC 49882 / DSM 28221 / CCUG 30454 / Houston 1) (Rochalimaea henselae).